Consider the following 161-residue polypeptide: Peptidyl-prolyl cis-trans isomerase-like 1 (161 aa).

Residues 1 to 155 enclose the PPIase cyclophilin-type domain; sequence MATDVVFDTS…DEVKIIRAKV (155 aa).

The protein belongs to the cyclophilin-type PPIase family. PPIL1 subfamily.

It catalyses the reaction [protein]-peptidylproline (omega=180) = [protein]-peptidylproline (omega=0). PPIases accelerate the folding of proteins. It catalyzes the cis-trans isomerization of proline imidic peptide bonds in oligopeptides. In Aspergillus fumigatus (strain ATCC MYA-4609 / CBS 101355 / FGSC A1100 / Af293) (Neosartorya fumigata), this protein is Peptidyl-prolyl cis-trans isomerase-like 1 (cyp1).